Here is a 464-residue protein sequence, read N- to C-terminus: GDNF family receptor alpha-2 (464 aa).

Residues 1–21 form the signal peptide; it reads MILANVFCLFFFLDETLRSLA. 14 disulfides stabilise this stretch: Cys-40–Cys-93, Cys-47–Cys-53, Cys-63–Cys-78, Cys-95–Cys-105, Cys-161–Cys-222, Cys-168–Cys-174, Cys-185–Cys-200, Cys-195–Cys-241, Cys-224–Cys-229, Cys-251–Cys-323, Cys-258–Cys-264, Cys-275–Cys-293, Cys-285–Cys-347, and Cys-325–Cys-335. N-linked (GlcNAc...) asparagine glycosylation occurs at Asn-52. N-linked (GlcNAc...) asparagine glycans are attached at residues Asn-357 and Asn-413. A lipid anchor (GPI-anchor amidated serine) is attached at Ser-444. Residues 445–464 constitute a propeptide, removed in mature form; the sequence is RARPSAALTVLSVLMLKLAL.

This sequence belongs to the GDNFR family. In terms of assembly, interacts with NRTN ligand and RET: forms a 2:2:2 ternary complex composed of NRTN ligand, GFRA2 and RET receptor. Also forms a 4:4:4 tetrameric complex composed of 4 copies of NRTN ligand, GFRA2 and RET receptor, which prevents endocytosis of RET. Interacts with SORL1.

It localises to the cell membrane. In terms of biological role, receptor for neurturin (NRTN), a growth factor that supports the survival of sympathetic neurons. NRTN-binding leads to autophosphorylation and activation of the RET receptor. Also able to mediate GDNF signaling through the RET tyrosine kinase receptor. In Pongo abelii (Sumatran orangutan), this protein is GDNF family receptor alpha-2 (GFRA2).